The chain runs to 505 residues: Ribose import ATP-binding protein RbsA 2 (505 aa).

2 ABC transporter domains span residues 13–249 and 259–503; these read LALE…VGRD and VRAG…TGRA. Residue 45–52 participates in ATP binding; that stretch reads GENGAGKS.

This sequence belongs to the ABC transporter superfamily. Ribose importer (TC 3.A.1.2.1) family. As to quaternary structure, the complex is composed of an ATP-binding protein (RbsA), two transmembrane proteins (RbsC) and a solute-binding protein (RbsB).

The protein localises to the cell membrane. It catalyses the reaction D-ribose(out) + ATP + H2O = D-ribose(in) + ADP + phosphate + H(+). Part of the ABC transporter complex RbsABC involved in ribose import. Responsible for energy coupling to the transport system. The chain is Ribose import ATP-binding protein RbsA 2 from Streptomyces avermitilis (strain ATCC 31267 / DSM 46492 / JCM 5070 / NBRC 14893 / NCIMB 12804 / NRRL 8165 / MA-4680).